A 695-amino-acid polypeptide reads, in one-letter code: Polyribonucleotide nucleotidyltransferase (695 aa).

Mg(2+) contacts are provided by aspartate 486 and aspartate 492. Residues 553–612 enclose the KH domain; the sequence is PRIETMQINTSKIATVIGPGGKQIRQIIERSGAQVDINDDGVINIAASTQESINKAKELI. Positions 622 to 690 constitute an S1 motif domain; sequence GKVYNGRVTS…EKGQLKLSHK (69 aa).

Belongs to the polyribonucleotide nucleotidyltransferase family. Mg(2+) is required as a cofactor.

It localises to the cytoplasm. The enzyme catalyses RNA(n+1) + phosphate = RNA(n) + a ribonucleoside 5'-diphosphate. Its function is as follows. Involved in mRNA degradation. Catalyzes the phosphorolysis of single-stranded polyribonucleotides processively in the 3'- to 5'-direction. In Chlamydia trachomatis serovar D (strain ATCC VR-885 / DSM 19411 / UW-3/Cx), this protein is Polyribonucleotide nucleotidyltransferase.